The chain runs to 354 residues: MTSCGCLVLEKVEDHGGEAAGRGRGRLAQGGGGGGGGCGSCAGEWRSRSETMFPIYVMGSSRASSAAAARGIVDAAGDPIWEAVKSEAKSEAEKEPILSSFLYASVLSHDCLERALSFVLANRLEDPTLLATQLIDIFNDVMMNNKDIRRSIRLDAQAFKDRDPACAQYSWALLYLKGYHSVQSYRIAHVLWNQGRKVLALALQSRISEVFAVDIHPAARIGEGILLDHGTGLVIGETAIVGNWVSLMQGVTLGGTGKENGDRHPKIGQGALLGAGATILGNINVGEGAMIAAGSLVLKDVPPHSMAVGNPAKVVGYKDKEDPSLTMKHDARRDYFEHVAVSFSDDKANGSVVK.

Belongs to the transferase hexapeptide repeat family. Homomultimer.

The enzyme catalyses L-serine + acetyl-CoA = O-acetyl-L-serine + CoA. It participates in amino-acid biosynthesis; L-cysteine biosynthesis; L-cysteine from L-serine: step 1/2. This chain is Probable serine acetyltransferase 2 (SAT2), found in Oryza sativa subsp. japonica (Rice).